The chain runs to 179 residues: ATP-dependent protease subunit HslV (179 aa).

Residue T7 is part of the active site. Na(+)-binding residues include G162, C165, and T168.

The protein belongs to the peptidase T1B family. HslV subfamily. In terms of assembly, a double ring-shaped homohexamer of HslV is capped on each side by a ring-shaped HslU homohexamer. The assembly of the HslU/HslV complex is dependent on binding of ATP.

It localises to the cytoplasm. It carries out the reaction ATP-dependent cleavage of peptide bonds with broad specificity.. Allosterically activated by HslU binding. In terms of biological role, protease subunit of a proteasome-like degradation complex believed to be a general protein degrading machinery. The sequence is that of ATP-dependent protease subunit HslV from Bordetella petrii (strain ATCC BAA-461 / DSM 12804 / CCUG 43448).